Here is a 271-residue protein sequence, read N- to C-terminus: Cytosolic Fe-S cluster assembly factor NUBP2 (271 aa).

Residue methionine 1 is modified to N-acetylmethionine. 22 to 29 (GKGGVGKS) lines the ATP pocket. Residues cysteine 196 and cysteine 199 each contribute to the [4Fe-4S] cluster site.

It belongs to the Mrp/NBP35 ATP-binding proteins family. NUBP2/CFD1 subfamily. Heterotetramer of 2 NUBP1 and 2 NUBP2 chains. Interacts with KIFC1. Interacts with NUBP1. [4Fe-4S] cluster serves as cofactor. Widely expressed with highest expression in skeletal muscle.

It is found in the nucleus. The protein localises to the cytoplasm. The protein resides in the cytoskeleton. Its subcellular location is the microtubule organizing center. It localises to the centrosome. It is found in the cilium axoneme. The protein localises to the centriole. Functionally, component of the cytosolic iron-sulfur (Fe/S) protein assembly (CIA) machinery. Required for maturation of extramitochondrial Fe-S proteins. The NUBP1-NUBP2 heterotetramer forms a Fe-S scaffold complex, mediating the de novo assembly of an Fe-S cluster and its transfer to target apoproteins. Negatively regulates cilium formation and structure. This chain is Cytosolic Fe-S cluster assembly factor NUBP2, found in Homo sapiens (Human).